A 380-amino-acid chain; its full sequence is Alanine racemase (380 aa).

The Proton acceptor; specific for D-alanine role is filled by Lys39. Lys39 carries the post-translational modification N6-(pyridoxal phosphate)lysine. Position 137 (Arg137) interacts with substrate. Residue Tyr263 is the Proton acceptor; specific for L-alanine of the active site. Position 310 (Met310) interacts with substrate.

Belongs to the alanine racemase family. Requires pyridoxal 5'-phosphate as cofactor.

It catalyses the reaction L-alanine = D-alanine. The protein operates within amino-acid biosynthesis; D-alanine biosynthesis; D-alanine from L-alanine: step 1/1. In terms of biological role, catalyzes the interconversion of L-alanine and D-alanine. May also act on other amino acids. This chain is Alanine racemase (alr), found in Macrococcus caseolyticus (strain JCSC5402) (Macrococcoides caseolyticum).